Reading from the N-terminus, the 87-residue chain is Small ribosomal subunit protein bS20 (87 aa).

It belongs to the bacterial ribosomal protein bS20 family.

In terms of biological role, binds directly to 16S ribosomal RNA. This Neorickettsia sennetsu (strain ATCC VR-367 / Miyayama) (Ehrlichia sennetsu) protein is Small ribosomal subunit protein bS20.